Here is a 564-residue protein sequence, read N- to C-terminus: Formate--tetrahydrofolate ligase (564 aa).

Threonine 65–threonine 72 is a binding site for ATP.

The protein belongs to the formate--tetrahydrofolate ligase family.

It carries out the reaction (6S)-5,6,7,8-tetrahydrofolate + formate + ATP = (6R)-10-formyltetrahydrofolate + ADP + phosphate. The protein operates within one-carbon metabolism; tetrahydrofolate interconversion. This Roseiflexus castenholzii (strain DSM 13941 / HLO8) protein is Formate--tetrahydrofolate ligase.